Here is a 419-residue protein sequence, read N- to C-terminus: Fusaric acid cluster transcription factor FUB10 (419 aa).

Positions 16–47 form a DNA-binding region, zn(2)-C6 fungal-type; that stretch reads CDRCRAQKLRCHRDSGHSTDACLRCLKSGIEC. Residues 50 to 92 form a disordered region; sequence SKARPTGRPPSRQVQPTVVVEQGDTSSSSHTTDSSPSAGGTDM. A compositionally biased stretch (low complexity) spans 74–86; the sequence is TSSSSHTTDSSPS.

The protein localises to the nucleus. Transcription factor that regulates the expression of the gene cluster that mediates the biosynthesis of fusaric acid, a mycotoxin with low to moderate toxicity to animals and humans, but with high phytotoxic properties. The chain is Fusaric acid cluster transcription factor FUB10 from Gibberella fujikuroi (strain CBS 195.34 / IMI 58289 / NRRL A-6831) (Bakanae and foot rot disease fungus).